The following is a 125-amino-acid chain: Ribosome-binding factor A (125 aa).

The protein belongs to the RbfA family. As to quaternary structure, monomer. Binds 30S ribosomal subunits, but not 50S ribosomal subunits or 70S ribosomes.

The protein localises to the cytoplasm. Functionally, one of several proteins that assist in the late maturation steps of the functional core of the 30S ribosomal subunit. Associates with free 30S ribosomal subunits (but not with 30S subunits that are part of 70S ribosomes or polysomes). Required for efficient processing of 16S rRNA. May interact with the 5'-terminal helix region of 16S rRNA. The chain is Ribosome-binding factor A from Chloroherpeton thalassium (strain ATCC 35110 / GB-78).